We begin with the raw amino-acid sequence, 398 residues long: Probable aminomethyltransferase (398 aa).

It belongs to the GcvT family. As to quaternary structure, the glycine cleavage system is composed of four proteins: P, T, L and H.

The catalysed reaction is N(6)-[(R)-S(8)-aminomethyldihydrolipoyl]-L-lysyl-[protein] + (6S)-5,6,7,8-tetrahydrofolate = N(6)-[(R)-dihydrolipoyl]-L-lysyl-[protein] + (6R)-5,10-methylene-5,6,7,8-tetrahydrofolate + NH4(+). The glycine cleavage system catalyzes the degradation of glycine. The sequence is that of Probable aminomethyltransferase from Pyrococcus horikoshii (strain ATCC 700860 / DSM 12428 / JCM 9974 / NBRC 100139 / OT-3).